The chain runs to 418 residues: Putative ion-transport protein YfeO (418 aa).

12 consecutive transmembrane segments (helical) span residues L10–V30, D54–I74, A99–P119, E120–P140, I149–I169, L186–P206, I223–C243, V258–V278, D300–F320, G322–H342, V343–V363, and L386–V406.

Belongs to the chloride channel (TC 2.A.49) family.

The protein localises to the cell membrane. The protein is Putative ion-transport protein YfeO of Escherichia fergusonii (strain ATCC 35469 / DSM 13698 / CCUG 18766 / IAM 14443 / JCM 21226 / LMG 7866 / NBRC 102419 / NCTC 12128 / CDC 0568-73).